The chain runs to 568 residues: Sphingosine-1-phosphate lyase 1 (568 aa).

Topologically, residues 1 to 40 (MPGTDLLKLKDFEPYLEILESYSTKAKNYVNGYCTKYEPW) are lumenal. A helical; Signal-anchor for type III membrane protein membrane pass occupies residues 41–61 (QLIAWSVLCTLLIVWVYELIF). Topologically, residues 62–568 (QPESLWSRFK…NQMNGSPKPR (507 aa)) are cytoplasmic. At Lys-353 the chain carries N6-(pyridoxal phosphate)lysine; alternate. Position 353 is an N6-acetyllysine; alternate (Lys-353). 3'-nitrotyrosine occurs at positions 356 and 366. Ser-564 bears the Phosphoserine mark.

The protein belongs to the group II decarboxylase family. Sphingosine-1-phosphate lyase subfamily. Pyridoxal 5'-phosphate is required as a cofactor. In terms of tissue distribution, highest levels are found in liver, small intestine and thymus, followed by kidney, lung, heart, spleen and brain (at protein level). Also detected in stomach, testis and skeletal muscle (at protein level).

The protein resides in the endoplasmic reticulum membrane. The catalysed reaction is sphinganine 1-phosphate = hexadecanal + phosphoethanolamine. It carries out the reaction sphing-4-enine 1-phosphate = (2E)-hexadecenal + phosphoethanolamine. Its pathway is lipid metabolism; sphingolipid metabolism. Functionally, cleaves phosphorylated sphingoid bases (PSBs), such as sphingosine-1-phosphate, into fatty aldehydes and phosphoethanolamine. Elevates stress-induced ceramide production and apoptosis. Required for global lipid homeostasis in liver and cholesterol homeostasis in fibroblasts. Involved in the regulation of pro-inflammatory response and neutrophil trafficking. Modulates neuronal autophagy via phosphoethanolamine production which regulates accumulation of aggregate-prone proteins such as APP. Seems to play a role in establishing neuronal contact sites and axonal maintenance. The sequence is that of Sphingosine-1-phosphate lyase 1 from Mus musculus (Mouse).